We begin with the raw amino-acid sequence, 509 residues long: Dol-P-Glc:Glc(2)Man(9)GlcNAc(2)-PP-Dol alpha-1,2-glucosyltransferase (509 aa).

Residues 1–4 (MGKL) lie on the Cytoplasmic side of the membrane. The helical transmembrane segment at 5–25 (AVAAITSLWVIPMSIIVNHIV) threads the bilayer. The Lumenal segment spans residues 26–57 (PEPYMDEIFHVPQAQQYCNGNFRSWDPMITTP). Residues 58-78 (PGLYYLSLAHVASLFPGMLLM) form a helical membrane-spanning segment. The Cytoplasmic portion of the chain corresponds to 79-99 (ENTSQSFSEACSTSVLRSTNA). A helical membrane pass occupies residues 100–120 (VSAVLCGVLVYEIIRFLGPNL). The Lumenal segment spans residues 121 to 124 (SDRK). Residues 125–145 (ATFMALVMSLYPLHWFFTFLY) traverse the membrane as a helical segment. Residues 146–170 (YTDVASLTAVLAMYLTCLKRRYVLS) lie on the Cytoplasmic side of the membrane. The helical transmembrane segment at 171–191 (ALFGTLAVFIRQTNVVWMLFV) threads the bilayer. Residues 192-285 (ACSGILDFTL…KWRILIKFSP (94 aa)) lie on the Lumenal side of the membrane. The disordered stretch occupies residues 210-254 (QEVNQELHQSSNKKGATLRSNLRKRKSDISSDTSDPFNHGQTVPS). 2 stretches are compositionally biased toward polar residues: residues 215-229 (ELHQ…TLRS) and 239-254 (SSDT…TVPS). A helical transmembrane segment spans residues 286-306 (FIFVVVAFGIFILWNGGIVLG). Residues 307-311 (AKEAH) are Cytoplasmic-facing. The helical transmembrane segment at 312–332 (VVSLHFAQIMYFSLVSALFTA) threads the bilayer. The Lumenal portion of the chain corresponds to 333 to 355 (PLHFSVNQLRHQFHQLHRNWSLS). Asn351 carries N-linked (GlcNAc...) asparagine glycosylation. A helical membrane pass occupies residues 356 to 376 (LILTLVALVAGFVSVHFFSLA). Over 377–400 (HPYLLADNRHYPFYLWRKIINAHW) the chain is Cytoplasmic. Residues 401 to 421 (LMKYILVPVYVYSWFSILTLL) form a helical membrane-spanning segment. Residues 422 to 428 (AKTRRQT) are Lumenal-facing. The helical transmembrane segment at 429–449 (WILVYFLATCGVLVPTPLIEF) threads the bilayer. Residues 450-472 (RYYTIPFYLFMLHSCVRSSSFAT) lie on the Cytoplasmic side of the membrane. A helical membrane pass occupies residues 473–493 (WLLIGTIFVSINVFTMAMFLF). Residues 494-509 (RPFKWSHEDGVQRFIW) are Lumenal-facing.

Belongs to the ALG10 glucosyltransferase family.

It is found in the endoplasmic reticulum membrane. The enzyme catalyses an alpha-D-Glc-(1-&gt;3)-alpha-D-Glc-(1-&gt;3)-alpha-D-Man-(1-&gt;2)-alpha-D-Man-(1-&gt;2)-alpha-D-Man-(1-&gt;3)-[alpha-D-Man-(1-&gt;2)-alpha-D-Man-(1-&gt;3)-[alpha-D-Man-(1-&gt;2)-alpha-D-Man-(1-&gt;6)]-alpha-D-Man-(1-&gt;6)]-beta-D-Man-(1-&gt;4)-beta-D-GlcNAc-(1-&gt;4)-alpha-D-GlcNAc-diphospho-di-trans,poly-cis-dolichol + a di-trans,poly-cis-dolichyl beta-D-glucosyl phosphate = a alpha-D-Glc-(1-&gt;2)-alpha-D-Glc-(1-&gt;3)-alpha-D-Glc-(1-&gt;3)-alpha-D-Man-(1-&gt;2)-alpha-D-Man-(1-&gt;2)-alpha-D-Man-(1-&gt;3)-[alpha-D-Man-(1-&gt;2)-alpha-D-Man-(1-&gt;3)-[alpha-D-Man-(1-&gt;2)-alpha-D-Man-(1-&gt;6)]-alpha-D-Man-(1-&gt;6)]-beta-D-Man-(1-&gt;4)-beta-D-GlcNAc-(1-&gt;4)-alpha-D-GlcNAc-diphospho-di-trans,poly-cis-dolichol + a di-trans,poly-cis-dolichyl phosphate + H(+). It functions in the pathway protein modification; protein glycosylation. Its function is as follows. Dol-P-Glc:Glc(2)Man(9)GlcNAc(2)-PP-Dol alpha-1,2-glucosyltransferase that operates in the biosynthetic pathway of dolichol-linked oligosaccharides, the glycan precursors employed in protein asparagine (N)-glycosylation. The assembly of dolichol-linked oligosaccharides begins on the cytosolic side of the endoplasmic reticulum membrane and finishes in its lumen. The sequential addition of sugars to dolichol pyrophosphate produces dolichol-linked oligosaccharides containing fourteen sugars, including two GlcNAcs, nine mannoses and three glucoses. Once assembled, the oligosaccharide is transferred from the lipid to nascent proteins by oligosaccharyltransferases. In the lumen of the endoplasmic reticulum, adds the third and last glucose residue from dolichyl phosphate glucose (Dol-P-Glc) onto the lipid-linked oligosaccharide intermediate Glc(2)Man(9)GlcNAc(2)-PP-Dol to produce Glc(3)Man(9)GlcNAc(2)-PP-Dol. This Arabidopsis thaliana (Mouse-ear cress) protein is Dol-P-Glc:Glc(2)Man(9)GlcNAc(2)-PP-Dol alpha-1,2-glucosyltransferase.